Here is a 288-residue protein sequence, read N- to C-terminus: Solute carrier family 25 member 45 (288 aa).

Solcar repeat units lie at residues 1 to 83 (MPVE…TLLA), 97 to 191 (PSYT…LCRQ), and 199 to 286 (PSSA…LLRL). A run of 6 helical transmembrane segments spans residues 6–26 (FVAG…FDTV), 58–78 (GMSF…GVYS), 102–122 (IFIA…PFDL), 166–186 (GSWA…VTYE), 202–222 (ATVL…ATPF), and 266–286 (SARA…LLRL).

Belongs to the mitochondrial carrier (TC 2.A.29) family. In terms of tissue distribution, widely expressed, with highest levels in testis, liver and kidney and low levels in brain, including cortex, cerebellum, hippocampus and hypothalamus, and heart.

The protein resides in the mitochondrion inner membrane. The sequence is that of Solute carrier family 25 member 45 (Slc25a45) from Mus musculus (Mouse).